The chain runs to 72 residues: Translation initiation factor IF-1 (72 aa).

Residues 1–72 (MSKDDCIEFE…TKGRIIYRMK (72 aa)) form the S1-like domain.

This sequence belongs to the IF-1 family. As to quaternary structure, component of the 30S ribosomal translation pre-initiation complex which assembles on the 30S ribosome in the order IF-2 and IF-3, IF-1 and N-formylmethionyl-tRNA(fMet); mRNA recruitment can occur at any time during PIC assembly.

Its subcellular location is the cytoplasm. Its function is as follows. One of the essential components for the initiation of protein synthesis. Stabilizes the binding of IF-2 and IF-3 on the 30S subunit to which N-formylmethionyl-tRNA(fMet) subsequently binds. Helps modulate mRNA selection, yielding the 30S pre-initiation complex (PIC). Upon addition of the 50S ribosomal subunit IF-1, IF-2 and IF-3 are released leaving the mature 70S translation initiation complex. This Xylella fastidiosa (strain Temecula1 / ATCC 700964) protein is Translation initiation factor IF-1.